The following is a 156-amino-acid chain: Transcription antitermination protein NusB (156 aa).

The protein belongs to the NusB family.

Involved in transcription antitermination. Required for transcription of ribosomal RNA (rRNA) genes. Binds specifically to the boxA antiterminator sequence of the ribosomal RNA (rrn) operons. The chain is Transcription antitermination protein NusB from Mycobacterium bovis (strain ATCC BAA-935 / AF2122/97).